The sequence spans 269 residues: Sushi domain-containing protein 3 (269 aa).

The segment at 1–23 is disordered; sequence MRRTSATLRGRARPRWRAGNTTP. Topologically, residues 1-103 are extracellular; it reads MRRTSATLRG…VPPHETFGFK (103 aa). The Sushi domain occupies 30 to 93; sequence GTCAQLHPPP…WSSGSPVCKA (64 aa). 2 disulfides stabilise this stretch: Cys32-Cys75 and Cys61-Cys91. The helical transmembrane segment at 104-124 threads the bilayer; the sequence is VAVIASIVSCAIILLMSMAFL. Over 125-269 the chain is Cytoplasmic; sequence TCCLLKCVQK…PGRPKVYLPG (145 aa). A disordered region spans residues 171–237; that stretch reads NNSSSVGGGN…RMGTPGPGGC (67 aa). The span at 176 to 190 shows a compositional bias: gly residues; it reads VGGGNGGPSGGGGKP.

Its subcellular location is the cell membrane. This is Sushi domain-containing protein 3 (Susd3) from Mus musculus (Mouse).